The chain runs to 63 residues: Transmembrane protein 033R (63 aa).

The chain is Transmembrane protein 033R from Dryophytes versicolor (chameleon treefrog).